The following is an 895-amino-acid chain: Protein translocase subunit SecA (895 aa).

ATP contacts are provided by residues Gln-87, 105-109, and Asp-512; that span reads GEGKT. The span at 833–852 shows a compositional bias: basic and acidic residues; sequence TQEEVEQAERQRQEMAKRET. A disordered region spans residues 833 to 895; sequence TQEEVEQAER…KHCHGSKAKY (63 aa). Cys-877, Cys-879, Cys-888, and His-889 together coordinate Zn(2+). A compositionally biased stretch (basic residues) spans 883-895; it reads KKYKHCHGSKAKY.

This sequence belongs to the SecA family. As to quaternary structure, monomer and homodimer. Part of the essential Sec protein translocation apparatus which comprises SecA, SecYEG and auxiliary proteins SecDF-YajC and YidC. It depends on Zn(2+) as a cofactor.

Its subcellular location is the cell inner membrane. It is found in the cytoplasm. The enzyme catalyses ATP + H2O + cellular proteinSide 1 = ADP + phosphate + cellular proteinSide 2.. Part of the Sec protein translocase complex. Interacts with the SecYEG preprotein conducting channel. Has a central role in coupling the hydrolysis of ATP to the transfer of proteins into and across the cell membrane, serving both as a receptor for the preprotein-SecB complex and as an ATP-driven molecular motor driving the stepwise translocation of polypeptide chains across the membrane. This Pasteurella multocida (strain Pm70) protein is Protein translocase subunit SecA.